Here is a 186-residue protein sequence, read N- to C-terminus: Ribosome-recycling factor (186 aa).

The protein belongs to the RRF family.

The protein localises to the cytoplasm. In terms of biological role, responsible for the release of ribosomes from messenger RNA at the termination of protein biosynthesis. May increase the efficiency of translation by recycling ribosomes from one round of translation to another. This chain is Ribosome-recycling factor, found in Bartonella henselae (strain ATCC 49882 / DSM 28221 / CCUG 30454 / Houston 1) (Rochalimaea henselae).